Here is a 556-residue protein sequence, read N- to C-terminus: F-box protein YDR131C (556 aa).

The region spanning 1–44 (MFDKLPYEIFKQIAWRIPQEDKISLTYVCKRSYESIIPFIYQNL) is the F-box domain.

Interacts with SKP1. Component of the probable SCF(YDR131C) complex containing CDC53, SKP1, RBX1 and YDR131C.

It is found in the vacuole. The protein operates within protein modification; protein ubiquitination. Its function is as follows. Substrate recognition component of a SCF (SKP1-CUL1-F-box protein) E3 ubiquitin-protein ligase complex which mediates the ubiquitination and subsequent proteasomal degradation of target proteins. Probably recognizes and binds to phosphorylated target proteins. The chain is F-box protein YDR131C from Saccharomyces cerevisiae (strain ATCC 204508 / S288c) (Baker's yeast).